A 161-amino-acid chain; its full sequence is Phosphopantetheine adenylyltransferase (161 aa).

Residue Ser-9 participates in substrate binding. ATP-binding positions include 9 to 10 and His-17; that span reads SF. Substrate-binding residues include Lys-41, Thr-73, and Arg-87. ATP-binding positions include 88-90, Glu-98, and 123-129; these read GLR and YSFISST.

This sequence belongs to the bacterial CoaD family. As to quaternary structure, homohexamer. Requires Mg(2+) as cofactor.

The protein localises to the cytoplasm. It catalyses the reaction (R)-4'-phosphopantetheine + ATP + H(+) = 3'-dephospho-CoA + diphosphate. It participates in cofactor biosynthesis; coenzyme A biosynthesis; CoA from (R)-pantothenate: step 4/5. In terms of biological role, reversibly transfers an adenylyl group from ATP to 4'-phosphopantetheine, yielding dephospho-CoA (dPCoA) and pyrophosphate. The chain is Phosphopantetheine adenylyltransferase from Desulforamulus reducens (strain ATCC BAA-1160 / DSM 100696 / MI-1) (Desulfotomaculum reducens).